Reading from the N-terminus, the 281-residue chain is Small ribosomal subunit protein uS2 (281 aa).

A disordered region spans residues 225-281; that stretch reads LMERKAEKPEEEETEEAAPRRERRARSGARRSRQNENEATAEAATEVAEAPEAEEAE. A compositionally biased stretch (basic residues) spans 245 to 256; the sequence is RERRARSGARRS. Over residues 262-272 the composition is skewed to low complexity; the sequence is EATAEAATEVA.

Belongs to the universal ribosomal protein uS2 family.

This chain is Small ribosomal subunit protein uS2, found in Porphyromonas gingivalis (strain ATCC 33277 / DSM 20709 / CIP 103683 / JCM 12257 / NCTC 11834 / 2561).